Reading from the N-terminus, the 399-residue chain is Elongation factor Tu (399 aa).

The 195-residue stretch at Lys-10–Glu-204 folds into the tr-type G domain. Residues Gly-19–Thr-26 are G1. Residue Gly-19–Thr-26 coordinates GTP. Thr-26 serves as a coordination point for Mg(2+). A G2 region spans residues Gly-60 to Asn-64. Positions Asp-81–Gly-84 are G3. Residues Asp-81–His-85 and Asn-136–Asp-139 each bind GTP. A G4 region spans residues Asn-136 to Asp-139. Positions Ser-174 to Leu-176 are G5.

It belongs to the TRAFAC class translation factor GTPase superfamily. Classic translation factor GTPase family. EF-Tu/EF-1A subfamily. In terms of assembly, monomer.

The protein resides in the cytoplasm. The enzyme catalyses GTP + H2O = GDP + phosphate + H(+). In terms of biological role, GTP hydrolase that promotes the GTP-dependent binding of aminoacyl-tRNA to the A-site of ribosomes during protein biosynthesis. The sequence is that of Elongation factor Tu from Prochlorococcus marinus (strain MIT 9313).